The sequence spans 533 residues: (E)-beta-farnesene synthase (533 aa).

The Mg(2+) site is built by Asp286, Asp290, Asn430, Ser434, and Glu438. Residues 286 to 290 (DDMMD) carry the DDXXD motif motif.

This sequence belongs to the terpene synthase family. Mg(2+) serves as cofactor. Requires Co(2+) as cofactor. It depends on Mn(2+) as a cofactor.

It localises to the cytoplasm. It catalyses the reaction (2E,6E)-farnesyl diphosphate = (E)-beta-farnesene + diphosphate. Its pathway is secondary metabolite biosynthesis; terpenoid biosynthesis. Its function is as follows. Sesquiterpene cyclase catalyzing the production of sixfold more beta-farnesene than alpha-bergamotene from farnesyl diphosphate. Involved in indirect defense by producing volatile signals attracting natural enemies of herbivores. The sequence is that of (E)-beta-farnesene synthase from Zea diploperennis (Diploperennial teosinte).